A 1134-amino-acid chain; its full sequence is Protocadherin 18 (1134 aa).

The signal sequence occupies residues 1 to 27 (MHQMNTKMHFRFALALLMAFFSHDVLA). Cadherin domains follow at residues 28-137 (KNLK…SPQF), 138-246 (SRPV…SPAF), 247-354 (EQPS…KPEI), 361-465 (PGKE…PPRF), 466-576 (QRSR…VPVV), and 582-688 (HNNT…STAM). Residues 28 to 699 (KNLKYRIYEE…SVSRASLDVS (672 aa)) are Extracellular-facing. Asparagine 103 carries an N-linked (GlcNAc...) asparagine glycan. A glycan (N-linked (GlcNAc...) asparagine) is linked at asparagine 269. An N-linked (GlcNAc...) asparagine glycan is attached at asparagine 559. The chain crosses the membrane as a helical span at residues 700–720 (MIIIISLGAICAVLLVIMVLF). Topologically, residues 721-1134 (ATRCNREKKD…NKLLQDVRQS (414 aa)) are cytoplasmic. Disordered regions lie at residues 769–800 (LPIR…NSHQ), 868–888 (SLKD…DLGR), 941–1004 (DYRS…SSLL), and 1022–1083 (FSEC…PSSK). Positions 791–800 (GSRQSHNSHQ) are enriched in polar residues. A compositionally biased stretch (basic and acidic residues) spans 868–877 (SLKDSGRGDS). Positions 892–1134 (IDRLLGEGFS…NKLLQDVRQS (243 aa)) are interaction with DAB1. Over residues 1027–1038 (EGDRSNSLERRK) the composition is skewed to basic and acidic residues. The segment covering 1059–1082 (THFQNPTSSSGTPLGTHSSVQPSS) has biased composition (polar residues).

As to quaternary structure, interacts with DAB1. As to expression, predominantly expressed in kidney and lung.

The protein localises to the cell membrane. In terms of biological role, potential calcium-dependent cell-adhesion protein. This is Protocadherin 18 (Pcdh18) from Mus musculus (Mouse).